We begin with the raw amino-acid sequence, 601 residues long: DNA ligase (601 aa).

Asp-258 contributes to the ATP binding site. Lys-260 (N6-AMP-lysine intermediate) is an active-site residue. ATP-binding residues include Arg-265, Arg-280, Glu-310, Phe-350, Arg-427, and Lys-433.

The protein belongs to the ATP-dependent DNA ligase family. The cofactor is Mg(2+). Requires Ca(2+) as cofactor. Mn(2+) is required as a cofactor.

The catalysed reaction is ATP + (deoxyribonucleotide)n-3'-hydroxyl + 5'-phospho-(deoxyribonucleotide)m = (deoxyribonucleotide)n+m + AMP + diphosphate.. Its function is as follows. DNA ligase that seals nicks in double-stranded DNA during DNA replication, DNA recombination and DNA repair. Also has low activity with dATP. Inactive with NAD(+), CTP, GTP, UTP, dCTP, dGTP or dTTP. The polypeptide is DNA ligase (Saccharolobus shibatae (strain ATCC 51178 / DSM 5389 / JCM 8931 / NBRC 15437 / B12) (Sulfolobus shibatae)).